A 299-amino-acid polypeptide reads, in one-letter code: Protease HtpX homolog (299 aa).

Helical transmembrane passes span 19–39 and 41–61; these read LFIVTFSLILFAIGYFFVWYF and WGLTGIVLLAIFIVLYNWIAY. His146 contributes to the Zn(2+) binding site. The active site involves Glu147. His150 lines the Zn(2+) pocket. The next 2 helical transmembrane spans lie at 156 to 176 and 198 to 218; these read ILLMTVVAVVAGLIILLRDVM and IILLIIGLIFSIIAPLIVLII. Glu227 is a binding site for Zn(2+).

The protein belongs to the peptidase M48B family. It depends on Zn(2+) as a cofactor.

The protein localises to the cell membrane. The protein is Protease HtpX homolog of Thermoanaerobacter pseudethanolicus (strain ATCC 33223 / 39E) (Clostridium thermohydrosulfuricum).